The following is a 123-amino-acid chain: Snaclec GPIB-binding protein subunit beta (123 aa).

Cystine bridges form between cysteine 2–cysteine 13, cysteine 30–cysteine 119, and cysteine 96–cysteine 111. The 112-residue stretch at 9 to 120 folds into the C-type lectin domain; the sequence is YGGHCYKLFK…CTRLQYFVCE (112 aa).

It belongs to the snaclec family. Heterodimer of subunits alpha and beta; disulfide-linked. Expressed by the venom gland.

It localises to the secreted. In terms of biological role, binds to platelet GPIb (subunit alpha) (GP1BA) and functions as a receptor blocker for vWF binding to GPIb. The platelet GPIb-binding site resides on the GPIB-BP subunit beta and not on the alpha subunit. At a final concentration of 104 nM totally abolishes vWF-dependent shear-induced platelet aggregation (SIPA) at a high shear stress, but had no effect on SIPA at a low shear stress. This Bothrops jararaca (Jararaca) protein is Snaclec GPIB-binding protein subunit beta.